The sequence spans 311 residues: Splicing factor spf30 (311 aa).

The region spanning 76 to 139 is the Tudor domain; that stretch reads DFTPGNLVMA…KAMPEEKRQE (64 aa). 2 disordered regions span residues 154–183 and 276–311; these read RSTP…RASS and STED…DEDS. Over residues 168–183 the composition is skewed to polar residues; the sequence is ASMSTSPSNYASRASS. Serine 173 carries the post-translational modification Phosphoserine. A compositionally biased stretch (basic and acidic residues) spans 301–311; that stretch reads HIYNYREDEDS.

It belongs to the SMN family. As to quaternary structure, associates with spliceosomes.

The protein resides in the nucleus. Involved in spliceosome assembly. This Schizosaccharomyces pombe (strain 972 / ATCC 24843) (Fission yeast) protein is Splicing factor spf30 (spf30).